A 493-amino-acid chain; its full sequence is Dipeptide and tripeptide permease B (493 aa).

The Cytoplasmic segment spans residues 1–27 (MERSTPTGLLQQPKPFFMIFFVELWER). The chain crosses the membrane as a helical span at residues 28–48 (FGYYGVQGILAVFFVQQLGFS). Over 49-52 (QEQA) the chain is Periplasmic. Residues 53-73 (FVTFGAFAALVYGLISIGGYV) form a helical membrane-spanning segment. Topologically, residues 74–82 (GDHLLGTKR) are cytoplasmic. A helical transmembrane segment spans residues 83 to 103 (TMVLGAVVLAAGYFATGLSLY). At 104–106 (QPN) the chain is on the periplasmic side. Residues 107 to 127 (LIFFALGTIAVGNGLFKANPA) traverse the membrane as a helical segment. Topologically, residues 128-146 (SLLSKCYPPKDPRLDGAFT) are cytoplasmic. Residues 147-167 (LFYMSINIGSLLSLSLAPVIA) traverse the membrane as a helical segment. Over 168–169 (ER) the chain is Periplasmic. The helical transmembrane segment at 170–190 (FGYTVTYYLCGIGLIFALLVY) threads the bilayer. Topologically, residues 191–212 (FCCRHMVRHIGSEPDTKPLNWR) are cytoplasmic. 2 helical membrane-spanning segments follow: residues 213-233 (NLLLVLLGSAVMICVCAWLMN) and 234-254 (HVFIANLVLIALSLIVVFIFF). Over 255 to 267 (REASKQDRLGRNK) the chain is Cytoplasmic. Residues 268-288 (MFVAFILMIEAIVFYVLYAQM) form a helical membrane-spanning segment. At 289–311 (PTSLNFFAINNVHHEILGFSINP) the chain is on the periplasmic side. Residues 312 to 332 (VSFQALNPFWVVVASPILASI) traverse the membrane as a helical segment. Residues 333–350 (YTRLGSQNRDLSMPAKFT) are Cytoplasmic-facing. The helical transmembrane segment at 351–371 (LGMFLCSLGFLTAAAAGMWFA) threads the bilayer. The Periplasmic portion of the chain corresponds to 372–379 (DAQGLTSP). The chain crosses the membrane as a helical span at residues 380-400 (WFIVLVYLFQSLGELMISALG). The Cytoplasmic portion of the chain corresponds to 401-424 (LAMVAALVPQYLMGFILGMWFLTQ). A helical membrane pass occupies residues 425–445 (AASFLIGGYVATFTATPEGMT). Residues 446–456 (DPLETLPIYTD) are Periplasmic-facing. Residues 457–477 (VFGKIGMVTLVIALVMALLIP) form a helical membrane-spanning segment. Residues 478–493 (WLNRMINSSAAEDAVA) lie on the Cytoplasmic side of the membrane.

Belongs to the major facilitator superfamily. Proton-dependent oligopeptide transporter (POT/PTR) (TC 2.A.17) family. DtpB subfamily.

It localises to the cell inner membrane. In terms of biological role, proton-dependent permease that transports di- and tripeptides. This is Dipeptide and tripeptide permease B from Yersinia enterocolitica serotype O:8 / biotype 1B (strain NCTC 13174 / 8081).